A 346-amino-acid chain; its full sequence is MPDTATVSSESEFSGHAHVAAPPPAGVDVRHDWSLSEVRALYELPLLDLVHKAQTVHRAVFVDNKVQLCSLLSIKTGGCPEDCSYCPQAARYKTGVKAEKLMAVPDVLDAASKARAAGATRFCMGAAWREVKDGPQFDSVLEMVRGVRALGMEACATLGMLSESQAKRLREAGLSAYNHNLDTSPEHYGDIISTRTYEDRLRTLNRVRDAGISVCCGGIIGMGESVDDRCNLLRTLANQEHHPESVPINALVAVEGTPLQEQQRVETVDMVRTIATARILMPQSMVRLSAGRQQMNEEAQLLCMMAGANSLFFGEKLLTTGNPEYTQDMALLEKAGIRPLEPRQEG.

Positions M1 to E12 are enriched in polar residues. A disordered region spans residues M1–A21. The Radical SAM core domain maps to N64–R292. [4Fe-4S] cluster-binding residues include C79, C83, and C86. [2Fe-2S] cluster contacts are provided by C123, C155, C215, and R287.

The protein belongs to the radical SAM superfamily. Biotin synthase family. As to quaternary structure, homodimer. It depends on [4Fe-4S] cluster as a cofactor. The cofactor is [2Fe-2S] cluster.

It catalyses the reaction (4R,5S)-dethiobiotin + (sulfur carrier)-SH + 2 reduced [2Fe-2S]-[ferredoxin] + 2 S-adenosyl-L-methionine = (sulfur carrier)-H + biotin + 2 5'-deoxyadenosine + 2 L-methionine + 2 oxidized [2Fe-2S]-[ferredoxin]. It participates in cofactor biosynthesis; biotin biosynthesis; biotin from 7,8-diaminononanoate: step 2/2. Catalyzes the conversion of dethiobiotin (DTB) to biotin by the insertion of a sulfur atom into dethiobiotin via a radical-based mechanism. The sequence is that of Biotin synthase from Myxococcus xanthus (strain DK1622).